Reading from the N-terminus, the 350-residue chain is MSHRTGIQASEDVKEIFARARNGKYRLLKISIENEQLVIGSYSQPSDSWDKDYDSFVLPLLEDKQPCYILFRLDSQNAQGYEWIFIAWSPDHSHVRQKMLYAATRATLKKEFGGGHIKDEVFGTVKEDVSLHGYKKYLLSQSSPAPLTAAEEELRQIKINEVQTDVGVDTKHQTLQGVAFPISREAFQALEKLNNRQLNYVQLEIDIKNEIIILANTTDTELKDLPKRIPKDSARYHFFLYKHSHEGDYLESIVFIYSMPGYTCSIRERMLYSSCKSPLLEIVERQLQMGVIRKIEIDNGDELTADFLYEEVHPKQHAHKQSFAKPKGPAGKRGIRRLIRGPAETEATTD.

Ser2 bears the N-acetylserine mark. In terms of domain architecture, ADF-H 1 spans 2–139; the sequence is SHRTGIQASE…SLHGYKKYLL (138 aa). 2 positions are modified to phosphoserine: Ser143 and Ser277. Residues 175-313 form the ADF-H 2 domain; it reads LQGVAFPISR…TADFLYEEVH (139 aa). Residue Tyr309 is modified to Phosphotyrosine. Residues 316–350 form a disordered region; it reads QHAHKQSFAKPKGPAGKRGIRRLIRGPAETEATTD. Thr349 is modified (phosphothreonine).

Belongs to the actin-binding proteins ADF family. Twinfilin subfamily. In terms of assembly, interacts with G-actin; ADP-actin form and capping protein (CP). May also be able to interact with TWF2 and phosphoinositides, PI(4,5)P2. When bound to PI(4,5)P2, it is down-regulated. Interacts with ACTG1. Post-translationally, phosphorylated on serine and threonine residues.

The protein localises to the cytoplasm. The protein resides in the cytoskeleton. Functionally, actin-binding protein involved in motile and morphological processes. Inhibits actin polymerization, likely by sequestering G-actin. By capping the barbed ends of filaments, it also regulates motility. Seems to play an important role in clathrin-mediated endocytosis and distribution of endocytic organelles. This Pongo abelii (Sumatran orangutan) protein is Twinfilin-1 (TWF1).